Here is a 110-residue protein sequence, read N- to C-terminus: Guanine nucleotide-binding protein subunit gamma (110 aa).

C106 carries S-palmitoyl cysteine lipidation. C107 bears the Cysteine methyl ester mark. C107 carries S-farnesyl cysteine lipidation. Residues 108-110 (TLM) constitute a propeptide, removed in mature form.

Belongs to the G protein gamma family. G proteins are composed of 3 units, alpha, beta and gamma. The beta-gamma subunit complex (STE4-STE18 complex) interacts with PLP1 and PLP2.

The protein resides in the membrane. Its function is as follows. Implicated in the pheromone A- and alpha-factor response pathway. The beta and gamma chains of the putative yeast mating response pathway G protein play a positive role in initiation of the mating response. The sequence is that of Guanine nucleotide-binding protein subunit gamma (STE18) from Saccharomyces cerevisiae (strain ATCC 204508 / S288c) (Baker's yeast).